A 438-amino-acid chain; its full sequence is UDP-N-acetylmuramoylalanine--D-glutamate ligase (438 aa).

115–121 contributes to the ATP binding site; it reads GSNGKST.

It belongs to the MurCDEF family.

It is found in the cytoplasm. It carries out the reaction UDP-N-acetyl-alpha-D-muramoyl-L-alanine + D-glutamate + ATP = UDP-N-acetyl-alpha-D-muramoyl-L-alanyl-D-glutamate + ADP + phosphate + H(+). Its pathway is cell wall biogenesis; peptidoglycan biosynthesis. Functionally, cell wall formation. Catalyzes the addition of glutamate to the nucleotide precursor UDP-N-acetylmuramoyl-L-alanine (UMA). The sequence is that of UDP-N-acetylmuramoylalanine--D-glutamate ligase from Vibrio atlanticus (strain LGP32) (Vibrio splendidus (strain Mel32)).